Consider the following 249-residue polypeptide: Probable transcriptional regulatory protein Rru_A1086 (249 aa).

It belongs to the TACO1 family.

It localises to the cytoplasm. In Rhodospirillum rubrum (strain ATCC 11170 / ATH 1.1.1 / DSM 467 / LMG 4362 / NCIMB 8255 / S1), this protein is Probable transcriptional regulatory protein Rru_A1086.